The chain runs to 388 residues: Succinyl-diaminopimelate desuccinylase (388 aa).

Residue His84 coordinates Zn(2+). Residue Asp86 is part of the active site. Residue Asp115 participates in Zn(2+) binding. Catalysis depends on Glu146, which acts as the Proton acceptor. 3 residues coordinate Zn(2+): Glu147, Glu175, and His360.

This sequence belongs to the peptidase M20A family. DapE subfamily. As to quaternary structure, homodimer. It depends on Zn(2+) as a cofactor. Co(2+) is required as a cofactor.

The catalysed reaction is N-succinyl-(2S,6S)-2,6-diaminopimelate + H2O = (2S,6S)-2,6-diaminopimelate + succinate. It functions in the pathway amino-acid biosynthesis; L-lysine biosynthesis via DAP pathway; LL-2,6-diaminopimelate from (S)-tetrahydrodipicolinate (succinylase route): step 3/3. Functionally, catalyzes the hydrolysis of N-succinyl-L,L-diaminopimelic acid (SDAP), forming succinate and LL-2,6-diaminopimelate (DAP), an intermediate involved in the bacterial biosynthesis of lysine and meso-diaminopimelic acid, an essential component of bacterial cell walls. This chain is Succinyl-diaminopimelate desuccinylase, found in Helicobacter pylori (strain G27).